The following is a 2424-amino-acid chain: Voltage-dependent P/Q-type calcium channel subunit alpha-1A (2424 aa).

The Cytoplasmic portion of the chain corresponds to 1–98 (MARFGDEMPA…KYAKKITEWP (98 aa)). The I repeat unit spans residues 85–363 (NVVRKYAKKI…LVLGVLSGEF (279 aa)). Residues 99 to 117 (PFEYMILATIIANCIVLAL) traverse the membrane as a helical segment. Residues 118–135 (EQHLPDDDKTPMSERLDD) are Extracellular-facing. Residues 136 to 155 (TEPYFIGIFCFEAGIKIIAL) form a helical membrane-spanning segment. Residues 156 to 167 (GFAFHKGSYLRN) are Cytoplasmic-facing. A helical membrane pass occupies residues 168-185 (GWNVMDFVVVLTGILATV). At 186–190 (GTEFD) the chain is on the extracellular side. A helical membrane pass occupies residues 191 to 209 (LRTLRAVRVLRPLKLVSGI). Topologically, residues 210-228 (PSLQVVLKSIMKAMIPLLQ) are cytoplasmic. Residues 229-248 (IGLLLFFAILIFAIIGLEFY) traverse the membrane as a helical segment. Over 249–335 (MGKFHTTCFE…NSNDASGNTW (87 aa)) the chain is Extracellular. An N-linked (GlcNAc...) asparagine glycan is attached at N283. E318 is a Ca(2+) binding site. The chain crosses the membrane as a helical span at residues 336–360 (NWLYFIPLIIIGSFFMLNLVLGVLS). Residues 361–487 (GEFAKERERV…FYIRRMVKTQ (127 aa)) lie on the Cytoplasmic side of the membrane. The interval 383 to 400 (QQIERELNGYMEWISKAE) is binding to the beta subunit. T409 carries the phosphothreonine modification. S448 and S451 each carry phosphoserine. One copy of the II repeat lies at 473 to 717 (ERRMRFYIRR…VFLAIAVDNL (245 aa)). The chain crosses the membrane as a helical span at residues 488 to 506 (AFYWTVLSLVALNTLCVAI). The Extracellular portion of the chain corresponds to 507-521 (VHYNQPEWLSDFLYY). A helical transmembrane segment spans residues 522–541 (AEFIFLGLFMSEMFIKMYGL). The Cytoplasmic portion of the chain corresponds to 542 to 549 (GTRPYFHS). Residues 550–568 (SFNCFDCGVIIGSIFEVIW) traverse the membrane as a helical segment. Over 569-578 (AVIKPGTSFG) the chain is Extracellular. A helical membrane pass occupies residues 579–597 (ISVLRALRLLRIFKVTKYW). The Cytoplasmic segment spans residues 598–616 (ASLRNLVVSLLNSMKSIIS). A helical membrane pass occupies residues 617-636 (LLFLLFLFIVVFALLGMQLF). The Extracellular segment spans residues 637–689 (GGQFNFDEGTPPTNFDTFPAAIMTVFQILTGEDWNEVMYDGIKSQGGVQGGMV). E668 provides a ligand contact to Ca(2+). The helical transmembrane segment at 690–714 (FSIYFIVLTLFGNYTLLNVFLAIAV) threads the bilayer. Topologically, residues 715-1253 (DNLANAQELT…RLCHYILNLR (539 aa)) are cytoplasmic. Phosphoserine is present on residues S750, S753, and S790. The interval 819–1229 (HLDRPLVVDP…GEDGPKPMPP (411 aa)) is disordered. 3 stretches are compositionally biased toward basic and acidic residues: residues 893–912 (ELSR…REGG), 922–931 (EAERGKAGDP), and 969–996 (RPGE…RSGE). Polar residues predominate over residues 1053–1065 (PNLSTTRPIQQDL). Phosphoserine is present on residues S1091 and S1104. A compositionally biased stretch (low complexity) spans 1110–1140 (SSTDPAGPTPATAANPQNSTASRRTPNNPGN). Residues 1151–1168 (ENSLIVTNPSTAQTNSAK) are compositionally biased toward polar residues. A compositionally biased stretch (basic and acidic residues) spans 1204 to 1214 (LPKKEDEKKEE). One copy of the III repeat lies at 1240 to 1523 (NPLRRLCHYI…IFVALIIITF (284 aa)). Residues 1254–1272 (YFEMCILMVIAMSSIALAA) form a helical membrane-spanning segment. The Extracellular segment spans residues 1273 to 1288 (EDPVQPNAPRNNVLRY). The helical transmembrane segment at 1289–1308 (FDYVFTGVFTFEMVIKMIDL) threads the bilayer. Topologically, residues 1309 to 1320 (GLVLHQGAYFRD) are cytoplasmic. The chain crosses the membrane as a helical span at residues 1321–1339 (LWNILDFIVVSGALVAFAF). Topologically, residues 1340–1350 (TGNSKGKDINT) are extracellular. Residues 1351 to 1369 (IKSLRVLRVLRPLKTIKRL) traverse the membrane as a helical segment. Over 1370–1388 (PKLKAVFDCVVNSLKNVFN) the chain is Cytoplasmic. Residues 1389-1408 (ILIVYMLFMFIFAVVAVQLF) traverse the membrane as a helical segment. The Extracellular segment spans residues 1409–1495 (KGKFFHCTDE…QGPSPGYRME (87 aa)). Residue E1469 participates in Ca(2+) binding. The chain crosses the membrane as a helical span at residues 1496–1520 (MSIFYVVYFVVFPFFFVNIFVALII). The Cytoplasmic portion of the chain corresponds to 1521–1575 (ITFQEQGDKMMEEYSLEKNERACIDFAISAKPLTRHMPQNKQSFQYRMWQFVVSP). One copy of the IV repeat lies at 1560 to 1823 (NKQSFQYRMW…LFVAVIMDNF (264 aa)). A helical transmembrane segment spans residues 1576–1604 (PFEYTIMAMIALNTIVLMMKFYGASVAYD). At 1605 to 1609 (NALKV) the chain is on the extracellular side. The chain crosses the membrane as a helical span at residues 1610-1629 (FNIVFTSLFSLECLLKVLAF). The Cytoplasmic segment spans residues 1630-1637 (GILNYFRD). Residues 1638 to 1656 (AWNIFDFVTVLGSITDILV) form a helical membrane-spanning segment. Residues 1657 to 1665 (TEFGNNFIN) are Extracellular-facing. Residue N1665 is glycosylated (N-linked (GlcNAc...) asparagine). Residues 1666 to 1684 (LSFLRLFRAARLIKLLRQG) form a helical membrane-spanning segment. Residues 1685–1703 (YTIRILLWTFVQSFKALPY) lie on the Cytoplasmic side of the membrane. Residues 1704–1723 (VCLLIAMLFFIYAIIGMQVF) form a helical membrane-spanning segment. The Extracellular portion of the chain corresponds to 1724-1795 (GNIGIDMEDE…ILTPECGNEF (72 aa)). A helical membrane pass occupies residues 1796 to 1820 (AYFYFVSFIFLCSFLMLNLFVAVIM). Residues 1821-2424 (DNFEYLTRDS…GGPRASAPSP (604 aa)) are Cytoplasmic-facing. T1993 is modified (phosphothreonine). The interval 1997–2424 (FQRMEPPPDE…GGPRASAPSP (428 aa)) is disordered. Polar residues predominate over residues 2037–2053 (SWVTQRAQEMFQKTGTW). Phosphoserine is present on residues S2054, S2072, S2084, S2086, S2127, and S2148. The span at 2074-2090 (EMREMSQDGYSDSEHCL) shows a compositional bias: basic and acidic residues. Basic and acidic residues-rich tracts occupy residues 2142–2159 (RRLD…ENQR) and 2200–2210 (PSREREQERGR). Positions 2211–2229 (PKDRKHRPHHHHHHHHHPG) are enriched in basic residues. Residues 2249–2262 (VARVRPARAPALAH) show a composition bias toward low complexity. The span at 2280-2305 (RRARRPRPRQRRRPRRRRGGGGRALR) shows a compositional bias: basic residues.

Belongs to the calcium channel alpha-1 subunit (TC 1.A.1.11) family. CACNA1A subfamily. Voltage-dependent calcium channels are multisubunit complexes, consisting of alpha-1, alpha-2, beta and delta subunits in a 1:1:1:1 ratio. The channel activity is directed by the pore-forming and voltage-sensitive alpha-1 subunit. In many cases, this subunit is sufficient to generate voltage-sensitive calcium channel activity. The auxiliary subunits beta and alpha-2/delta linked by a disulfide bridge regulate the channel activity. Interacts with CABP1. Interacts with the spider omega-agatoxin-IVA (AC P30288). Interacts with TSPOAP1. Brain specific. Purkinje cells contain predominantly P-type VSCC, the Q-type being a prominent calcium current in cerebellar granule cells.

The protein resides in the cell membrane. The catalysed reaction is Ca(2+)(in) = Ca(2+)(out). In terms of biological role, voltage-sensitive calcium channels (VSCC) mediate the entry of calcium ions into excitable cells and are also involved in a variety of calcium-dependent processes, including muscle contraction, hormone or neurotransmitter release, gene expression, cell motility, cell division and cell death. The isoform alpha-1A gives rise to P and/or Q-type calcium currents. P/Q-type calcium channels belong to the 'high-voltage activated' (HVA) group and are specifically blocked by the spider omega-agatoxin-IVA (AC P54282). They are however insensitive to dihydropyridines (DHP). The chain is Voltage-dependent P/Q-type calcium channel subunit alpha-1A (CACNA1A) from Oryctolagus cuniculus (Rabbit).